The primary structure comprises 1012 residues: Retinoblastoma-related protein (1012 aa).

The domain A stretch occupies residues 403–604 (TPVSTAMTTA…EKGSSMDNSL (202 aa)). The segment at 403–863 (TPVSTAMTTA…NEVFIPSVKP (461 aa)) is pocket. Residues 605–723 (IIARPALSAG…PGGGGETCAE (119 aa)) are spacer. The interval 724–863 (TGINIFFSKI…NEVFIPSVKP (140 aa)) is domain B. The interval 884 to 905 (NNDKDGQCPGSPKLSTFPSLPD) is disordered.

It belongs to the retinoblastoma protein (RB) family.

The protein resides in the nucleus. Functionally, regulator of biological processes that recruits a histone deacetylase to control gene transcription. May play a role in the entry into mitosis, negatively regulating the cell proliferation. Formation of stable complexes with geminiviridae replication-associated proteins may create a cellular environment which favors viral DNA replication. This is Retinoblastoma-related protein (RB) from Oxybasis rubra (Red goosefoot).